The following is a 1600-amino-acid chain: A disintegrin and metalloproteinase with thrombospondin motifs 12 (1600 aa).

The N-terminal stretch at methionine 1 to cysteine 25 is a signal peptide. Positions histidine 26–arginine 244 are excised as a propeptide. The N-linked (GlcNAc...) asparagine glycan is linked to asparagine 105. The short motif at proline 210–serine 217 is the Cysteine switch element. Position 212 (cysteine 212) interacts with Zn(2+). Residues arginine 250 to proline 460 form the Peptidase M12B domain. Disulfide bonds link cysteine 326/cysteine 380, cysteine 355/cysteine 362, cysteine 374/cysteine 455, cysteine 413/cysteine 439, cysteine 482/cysteine 505, cysteine 493/cysteine 511, cysteine 500/cysteine 530, cysteine 524/cysteine 535, cysteine 558/cysteine 595, cysteine 562/cysteine 600, and cysteine 573/cysteine 585. Residue histidine 396 participates in Zn(2+) binding. Glutamate 397 is a catalytic residue. Positions 400 and 406 each coordinate Zn(2+). A Disintegrin domain is found at valine 469–glycine 548. 4 consecutive TSP type-1 domains span residues proline 546 to arginine 601, lysine 827 to proline 887, tryptophan 891 to leucine 947, and cysteine 948 to proline 1001. A spacer 1 region spans residues cysteine 705 to phenylalanine 831. The interval proline 1001–tyrosine 1321 is spacer 2. Disordered stretches follow at residues valine 1006–serine 1140 and proline 1158–serine 1179. A compositionally biased stretch (low complexity) spans proline 1038–proline 1047. Residues glutamate 1048 to isoleucine 1107 show a composition bias toward polar residues. Low complexity predominate over residues threonine 1130–serine 1140. 4 consecutive TSP type-1 domains span residues serine 1318–alanine 1371, tryptophan 1373–glutamate 1428, proline 1429–leucine 1477, and cysteine 1478–arginine 1538. The 41-residue stretch at alanine 1541–proline 1581 folds into the PLAC domain.

In terms of assembly, interacts with COMP. Zn(2+) serves as cofactor. The precursor is cleaved by a furin endopeptidase. Post-translationally, subjected to an intracellular maturation process yielding a 120 kDa N-terminal fragment containing the metalloproteinase, disintegrin, one TSP type-1 and the Cys-rich domains and a 83 kDa C-terminal fragment containing the spacer 2 and four TSP type-1 domains. In terms of processing, glycosylated. Can be O-fucosylated by POFUT2 on a serine or a threonine residue found within the consensus sequence C1-X(2)-(S/T)-C2-G of the TSP type-1 repeat domains where C1 and C2 are the first and second cysteine residue of the repeat, respectively. Fucosylated repeats can then be further glycosylated by the addition of a beta-1,3-glucose residue by the glucosyltransferase, B3GALTL. Fucosylation mediates the efficient secretion of ADAMTS family members. Can also be C-glycosylated with one or two mannose molecules on tryptophan residues within the consensus sequence W-X-X-W of the TPRs, and N-glycosylated. These other glycosylations can also facilitate secretion.

It localises to the secreted. The protein localises to the extracellular space. The protein resides in the extracellular matrix. Inhibited by alpha-2 macroglobulin. Functionally, metalloprotease that plays a role in the degradation of COMP. Also cleaves alpha-2 macroglobulin and aggregan. Has anti-tumorigenic properties. The protein is A disintegrin and metalloproteinase with thrombospondin motifs 12 (Adamts12) of Mus musculus (Mouse).